The primary structure comprises 113 residues: Large ribosomal subunit protein eL36z (113 aa).

Over residues 78-88 (RKLGTHKRAKR) the composition is skewed to basic residues. The interval 78-113 (RKLGTHKRAKRKREEMSSVLRKMRSLGGAAAAEKKM) is disordered.

Belongs to the eukaryotic ribosomal protein eL36 family.

The chain is Large ribosomal subunit protein eL36z (RPL36A) from Arabidopsis thaliana (Mouse-ear cress).